The primary structure comprises 885 residues: Lon protease homolog 2, peroxisomal (885 aa).

The Lon N-terminal domain occupies Leu12–Leu256. Residues Leu70–Pro104 are disordered. Positions Ser77 to Val86 are enriched in gly residues. Basic and acidic residues predominate over residues Ser94–Pro104. Residue Gly409–Thr416 coordinates ATP. In terms of domain architecture, Lon proteolytic spans Val690–Gly875. Residues Ser781 and Lys824 contribute to the active site. Positions Ser883–Leu885 match the Microbody targeting signal motif.

Belongs to the peptidase S16 family.

It is found in the peroxisome matrix. The catalysed reaction is Hydrolysis of proteins in presence of ATP.. Functionally, ATP-dependent serine protease that mediates the selective degradation of misfolded and unassembled polypeptides in the peroxisomal matrix. Necessary for type 2 peroxisome targeting signal (PTS2)-containing protein processing and facilitates peroxisome matrix protein import. This is Lon protease homolog 2, peroxisomal (LON1) from Zea mays (Maize).